We begin with the raw amino-acid sequence, 216 residues long: MKFNSDMLKIYFVAGTQDVANKADFLPKVEEILQAGATAFQLREKGYNSIDNPAELTELAEKCHQLTQKYHVPLFIDDDVDLALAIHAEGIHVGQKDEKIESVLKRVQGSMIVGLSCNTEAQVKQANQLDGIDYLGTGTVFETTSKADAGAALGVAKLQELVELSHYPIVAIGGITLDNLPQTMATGVKGFAAISMFTQMTAVPTQMQKIKAIVKG.

4-amino-2-methyl-5-(diphosphooxymethyl)pyrimidine-binding positions include 41–45 (QLREK) and Asp-77. Mg(2+)-binding residues include Asp-78 and Asp-97. Ser-116 lines the 4-amino-2-methyl-5-(diphosphooxymethyl)pyrimidine pocket. 143–145 (TTS) provides a ligand contact to 2-[(2R,5Z)-2-carboxy-4-methylthiazol-5(2H)-ylidene]ethyl phosphate. Lys-146 is a binding site for 4-amino-2-methyl-5-(diphosphooxymethyl)pyrimidine. Residues Gly-174 and 194-195 (IS) each bind 2-[(2R,5Z)-2-carboxy-4-methylthiazol-5(2H)-ylidene]ethyl phosphate.

The protein belongs to the thiamine-phosphate synthase family. Requires Mg(2+) as cofactor.

It carries out the reaction 2-[(2R,5Z)-2-carboxy-4-methylthiazol-5(2H)-ylidene]ethyl phosphate + 4-amino-2-methyl-5-(diphosphooxymethyl)pyrimidine + 2 H(+) = thiamine phosphate + CO2 + diphosphate. It catalyses the reaction 2-(2-carboxy-4-methylthiazol-5-yl)ethyl phosphate + 4-amino-2-methyl-5-(diphosphooxymethyl)pyrimidine + 2 H(+) = thiamine phosphate + CO2 + diphosphate. The catalysed reaction is 4-methyl-5-(2-phosphooxyethyl)-thiazole + 4-amino-2-methyl-5-(diphosphooxymethyl)pyrimidine + H(+) = thiamine phosphate + diphosphate. The protein operates within cofactor biosynthesis; thiamine diphosphate biosynthesis; thiamine phosphate from 4-amino-2-methyl-5-diphosphomethylpyrimidine and 4-methyl-5-(2-phosphoethyl)-thiazole: step 1/1. In terms of biological role, condenses 4-methyl-5-(beta-hydroxyethyl)thiazole monophosphate (THZ-P) and 2-methyl-4-amino-5-hydroxymethyl pyrimidine pyrophosphate (HMP-PP) to form thiamine monophosphate (TMP). The protein is Thiamine-phosphate synthase of Pediococcus pentosaceus (strain ATCC 25745 / CCUG 21536 / LMG 10740 / 183-1w).